The sequence spans 1246 residues: Superkiller complex protein 2 (1246 aa).

Residues 220 to 246 (LGGGDEDENEAVGQPGGPRGDTVSASP) are disordered. A phosphoserine mark is found at serine 245 and serine 256. The Helicase ATP-binding domain maps to 319 to 475 (ILHLERHDSV…WIGRLKRRQI (157 aa)). 332 to 339 (AHTSAGKT) is a binding site for ATP. A DEVH box motif is present at residues 423 to 426 (DEVH). The Helicase C-terminal domain occupies 585–755 (GLTSLDLTTS…LTYTMILNLL (171 aa)).

It belongs to the helicase family. SKI2 subfamily. In terms of assembly, component of the SKI complex which consists of SKIC2, SKIC3 and SKIC8. Interacts with HBS1L isoform 2.

It localises to the nucleus. It is found in the cytoplasm. The catalysed reaction is ATP + H2O = ADP + phosphate + H(+). Its function is as follows. Helicase component of the SKI complex, a multiprotein complex that assists the RNA-degrading exosome during the mRNA decay and quality-control pathways. The SKI complex catalyzes mRNA extraction from 80S ribosomal complexes in the 3'-5' direction and channels mRNA to the cytosolic exosome for degradation. SKI-mediated extraction of mRNA from stalled ribosomes allow binding of the Pelota-HBS1L complex and subsequent ribosome disassembly by ABCE1 for ribosome recycling. In the nucleus, the SKI complex associates with transcriptionally active genes in a manner dependent on PAF1 complex (PAF1C). The protein is Superkiller complex protein 2 of Homo sapiens (Human).